The chain runs to 182 residues: Thioredoxin X, chloroplastic (182 aa).

The N-terminal 67 residues, M1 to R67, are a transit peptide targeting the chloroplast. Residues C68–N177 enclose the Thioredoxin domain. Residues C99 and C102 each act as nucleophile in the active site. A disulfide bridge connects residues C99 and C102.

This sequence belongs to the thioredoxin family. As to expression, predominantly expressed in leaves.

It is found in the plastid. Its subcellular location is the chloroplast stroma. In terms of biological role, probable thiol-disulfide oxidoreductase that may participate in various redox reactions. The protein is Thioredoxin X, chloroplastic (ATHX) of Arabidopsis thaliana (Mouse-ear cress).